Here is a 174-residue protein sequence, read N- to C-terminus: RNA pyrophosphohydrolase (174 aa).

Residues 6–149 enclose the Nudix hydrolase domain; the sequence is GYRPNVGIIL…KRDVYLEALK (144 aa). A Nudix box motif is present at residues 38 to 59; sequence GGIKPGESPETAMYRELYEEVG.

This sequence belongs to the Nudix hydrolase family. RppH subfamily. A divalent metal cation is required as a cofactor.

Functionally, accelerates the degradation of transcripts by removing pyrophosphate from the 5'-end of triphosphorylated RNA, leading to a more labile monophosphorylated state that can stimulate subsequent ribonuclease cleavage. This chain is RNA pyrophosphohydrolase, found in Neisseria gonorrhoeae (strain ATCC 700825 / FA 1090).